The primary structure comprises 1036 residues: Isoleucine--tRNA ligase (1036 aa).

Positions 46–56 (PFATGLPHYGH) match the 'HIGH' region motif. Residues 589–593 (KMSKR) carry the 'KMSKS' region motif. K592 provides a ligand contact to ATP.

Belongs to the class-I aminoacyl-tRNA synthetase family. IleS type 2 subfamily. Monomer. Requires Zn(2+) as cofactor.

It is found in the cytoplasm. It catalyses the reaction tRNA(Ile) + L-isoleucine + ATP = L-isoleucyl-tRNA(Ile) + AMP + diphosphate. In terms of biological role, catalyzes the attachment of isoleucine to tRNA(Ile). As IleRS can inadvertently accommodate and process structurally similar amino acids such as valine, to avoid such errors it has two additional distinct tRNA(Ile)-dependent editing activities. One activity is designated as 'pretransfer' editing and involves the hydrolysis of activated Val-AMP. The other activity is designated 'posttransfer' editing and involves deacylation of mischarged Val-tRNA(Ile). The sequence is that of Isoleucine--tRNA ligase from Chlamydia trachomatis serovar D (strain ATCC VR-885 / DSM 19411 / UW-3/Cx).